Reading from the N-terminus, the 339-residue chain is Phosphate acyltransferase (339 aa).

Belongs to the PlsX family. Homodimer. Probably interacts with PlsY.

The protein resides in the cytoplasm. It catalyses the reaction a fatty acyl-[ACP] + phosphate = an acyl phosphate + holo-[ACP]. Its pathway is lipid metabolism; phospholipid metabolism. Catalyzes the reversible formation of acyl-phosphate (acyl-PO(4)) from acyl-[acyl-carrier-protein] (acyl-ACP). This enzyme utilizes acyl-ACP as fatty acyl donor, but not acyl-CoA. The sequence is that of Phosphate acyltransferase from Clostridium perfringens (strain ATCC 13124 / DSM 756 / JCM 1290 / NCIMB 6125 / NCTC 8237 / Type A).